The sequence spans 191 residues: MPDALPPCSILILAGGRGQRMGGRDKGLVDWQGEPLIAHVHRAVRPLSDDLVISCNRNQAAYQAYADRLVGDAEADFPGPLAGVIAGLRVARHAWVVVLACDAPLVDRELIEGLLRLAVAGNSAAMVRQGGFWQPMFSVLPKRVLPVLEQAWAAGERSLQKALLREAVQGLECAESDRRLSNFNSPERLQD.

Residues 13–15 (LAG), lysine 26, aspartate 72, and aspartate 102 each bind GTP. Aspartate 102 serves as a coordination point for Mg(2+).

This sequence belongs to the MobA family. As to quaternary structure, monomer. Requires Mg(2+) as cofactor.

It localises to the cytoplasm. It catalyses the reaction Mo-molybdopterin + GTP + H(+) = Mo-molybdopterin guanine dinucleotide + diphosphate. Transfers a GMP moiety from GTP to Mo-molybdopterin (Mo-MPT) cofactor (Moco or molybdenum cofactor) to form Mo-molybdopterin guanine dinucleotide (Mo-MGD) cofactor. The polypeptide is Molybdenum cofactor guanylyltransferase (Pseudomonas putida (strain ATCC 47054 / DSM 6125 / CFBP 8728 / NCIMB 11950 / KT2440)).